Reading from the N-terminus, the 236-residue chain is 5'-methylthioadenosine/S-adenosylhomocysteine nucleosidase (236 aa).

Catalysis depends on Glu-12, which acts as the Proton acceptor. Substrate is bound by residues Gly-78, Ile-153, and 174–175 (ME). Asp-198 acts as the Proton donor in catalysis.

It belongs to the PNP/UDP phosphorylase family. MtnN subfamily.

It carries out the reaction S-adenosyl-L-homocysteine + H2O = S-(5-deoxy-D-ribos-5-yl)-L-homocysteine + adenine. It catalyses the reaction S-methyl-5'-thioadenosine + H2O = 5-(methylsulfanyl)-D-ribose + adenine. The enzyme catalyses 5'-deoxyadenosine + H2O = 5-deoxy-D-ribose + adenine. Its pathway is amino-acid biosynthesis; L-methionine biosynthesis via salvage pathway; S-methyl-5-thio-alpha-D-ribose 1-phosphate from S-methyl-5'-thioadenosine (hydrolase route): step 1/2. Catalyzes the irreversible cleavage of the glycosidic bond in both 5'-methylthioadenosine (MTA) and S-adenosylhomocysteine (SAH/AdoHcy) to adenine and the corresponding thioribose, 5'-methylthioribose and S-ribosylhomocysteine, respectively. Also cleaves 5'-deoxyadenosine, a toxic by-product of radical S-adenosylmethionine (SAM) enzymes, into 5-deoxyribose and adenine. This chain is 5'-methylthioadenosine/S-adenosylhomocysteine nucleosidase, found in Shewanella sp. (strain MR-7).